Here is a 321-residue protein sequence, read N- to C-terminus: Aspartate carbamoyltransferase catalytic subunit (321 aa).

2 residues coordinate carbamoyl phosphate: Arg-70 and Thr-71. Lys-98 contributes to the L-aspartate binding site. Carbamoyl phosphate is bound by residues Arg-120, His-148, and Gln-151. L-aspartate contacts are provided by Arg-181 and Arg-235. Gly-276 and Pro-277 together coordinate carbamoyl phosphate.

It belongs to the aspartate/ornithine carbamoyltransferase superfamily. ATCase family. As to quaternary structure, heterododecamer (2C3:3R2) of six catalytic PyrB chains organized as two trimers (C3), and six regulatory PyrI chains organized as three dimers (R2).

The catalysed reaction is carbamoyl phosphate + L-aspartate = N-carbamoyl-L-aspartate + phosphate + H(+). Its pathway is pyrimidine metabolism; UMP biosynthesis via de novo pathway; (S)-dihydroorotate from bicarbonate: step 2/3. In terms of biological role, catalyzes the condensation of carbamoyl phosphate and aspartate to form carbamoyl aspartate and inorganic phosphate, the committed step in the de novo pyrimidine nucleotide biosynthesis pathway. This Gluconacetobacter diazotrophicus (strain ATCC 49037 / DSM 5601 / CCUG 37298 / CIP 103539 / LMG 7603 / PAl5) protein is Aspartate carbamoyltransferase catalytic subunit.